Reading from the N-terminus, the 84-residue chain is Large ribosomal subunit protein bL27 (84 aa).

The interval 1 to 21 (MAHKKGGGSTKNGRDSNPKYL) is disordered.

This sequence belongs to the bacterial ribosomal protein bL27 family.

This Chlorobium limicola (strain DSM 245 / NBRC 103803 / 6330) protein is Large ribosomal subunit protein bL27.